A 166-amino-acid chain; its full sequence is NAD(P)H-quinone oxidoreductase subunit I, chloroplastic (166 aa).

4Fe-4S ferredoxin-type domains follow at residues 55 to 84 and 95 to 124; these read GRIH…VDWK and LNYS…MTEE. Positions 64, 67, 70, 74, 104, 107, 110, and 114 each coordinate [4Fe-4S] cluster.

This sequence belongs to the complex I 23 kDa subunit family. As to quaternary structure, NDH is composed of at least 16 different subunits, 5 of which are encoded in the nucleus. [4Fe-4S] cluster is required as a cofactor.

The protein localises to the plastid. The protein resides in the chloroplast thylakoid membrane. It carries out the reaction a plastoquinone + NADH + (n+1) H(+)(in) = a plastoquinol + NAD(+) + n H(+)(out). The catalysed reaction is a plastoquinone + NADPH + (n+1) H(+)(in) = a plastoquinol + NADP(+) + n H(+)(out). NDH shuttles electrons from NAD(P)H:plastoquinone, via FMN and iron-sulfur (Fe-S) centers, to quinones in the photosynthetic chain and possibly in a chloroplast respiratory chain. The immediate electron acceptor for the enzyme in this species is believed to be plastoquinone. Couples the redox reaction to proton translocation, and thus conserves the redox energy in a proton gradient. This is NAD(P)H-quinone oxidoreductase subunit I, chloroplastic from Espeletia timotensis (Andean giant rosette).